Consider the following 357-residue polypeptide: DNA integrity scanning protein DisA (357 aa).

The 141-residue stretch at Pro-8 to Asp-148 folds into the DAC domain. 3',3'-c-di-AMP contacts are provided by Gly-76, Leu-94, Thr-107, Thr-111, and Arg-128.

It belongs to the DisA family. In terms of assembly, homooctamer. The cofactor is Mg(2+).

The enzyme catalyses 2 ATP = 3',3'-c-di-AMP + 2 diphosphate. Its activity is regulated as follows. Inhibited by 3'-dATP. Its function is as follows. Participates in a DNA-damage check-point. DisA forms globular foci that rapidly scan along the chromosomes searching for lesions. In terms of biological role, has diadenylate cyclase activity, catalyzing the condensation of 2 ATP molecules into cyclic di-AMP (c-di-AMP). c-di-AMP likely acts as a signaling molecule that may couple DNA integrity with a cellular process. This rate-limiting step is the accessibility of the active site; mutating the possible exit tunnel (residues 128-130) increases product 2-fold despite Arg-130 being important for ATP-binding. Does not convert GTP to c-di-GMP. The sequence is that of DNA integrity scanning protein DisA from Thermotoga maritima (strain ATCC 43589 / DSM 3109 / JCM 10099 / NBRC 100826 / MSB8).